The chain runs to 665 residues: Long chain acyl-CoA synthetase 2 (665 aa).

228–239 is an ATP binding site; that stretch reads IMYTSGTTGEPK. Residues 496–520 form a fatty acid-binding region; the sequence is DGWFHTGDIGEWQEDGSMKIIDRKK.

It belongs to the ATP-dependent AMP-binding enzyme family. Mg(2+) serves as cofactor. In terms of tissue distribution, expressed along the entire length of the stem, but expression was not entirely epidermal specific, with some expression found in internal cell layers as well. Was expressed in leave epidermal cells, flowers (sepals, petals, stamens, filaments and carpel), siliques and developing seeds. In roots, expression was detected in an internal cell layer, probably the endodermal layer.

It localises to the endoplasmic reticulum. The enzyme catalyses a long-chain fatty acid + ATP + CoA = a long-chain fatty acyl-CoA + AMP + diphosphate. It participates in lipid metabolism; fatty acid metabolism. In terms of biological role, activation of long-chain fatty acids for both synthesis of cellular lipids, and degradation via beta-oxidation. Acts in the cutin pathway. Preferentially uses palmitate, palmitoleate, oleate and linoleate. Required for repression of lateral root formation through its role in cutin biosynthesis and subsequent aerial tissues permeability. This chain is Long chain acyl-CoA synthetase 2 (LACS2), found in Arabidopsis thaliana (Mouse-ear cress).